The following is a 156-amino-acid chain: 6,7-dimethyl-8-ribityllumazine synthase (156 aa).

5-amino-6-(D-ribitylamino)uracil-binding positions include F22, 57–59 (AVE), and 81–83 (SVI). 86-87 (GT) is a (2S)-2-hydroxy-3-oxobutyl phosphate binding site. Residue H89 is the Proton donor of the active site. F114 contacts 5-amino-6-(D-ribitylamino)uracil. R128 is a (2S)-2-hydroxy-3-oxobutyl phosphate binding site.

This sequence belongs to the DMRL synthase family. Forms an icosahedral capsid composed of 60 subunits, arranged as a dodecamer of pentamers.

The catalysed reaction is (2S)-2-hydroxy-3-oxobutyl phosphate + 5-amino-6-(D-ribitylamino)uracil = 6,7-dimethyl-8-(1-D-ribityl)lumazine + phosphate + 2 H2O + H(+). It functions in the pathway cofactor biosynthesis; riboflavin biosynthesis; riboflavin from 2-hydroxy-3-oxobutyl phosphate and 5-amino-6-(D-ribitylamino)uracil: step 1/2. In terms of biological role, catalyzes the formation of 6,7-dimethyl-8-ribityllumazine by condensation of 5-amino-6-(D-ribitylamino)uracil with 3,4-dihydroxy-2-butanone 4-phosphate. This is the penultimate step in the biosynthesis of riboflavin. In Aliivibrio salmonicida (strain LFI1238) (Vibrio salmonicida (strain LFI1238)), this protein is 6,7-dimethyl-8-ribityllumazine synthase.